We begin with the raw amino-acid sequence, 506 residues long: Histidine ammonia-lyase (506 aa).

Residues 143–145 (ASG) constitute a cross-link (5-imidazolinone (Ala-Gly)). Position 144 is a 2,3-didehydroalanine (Ser) (serine 144).

The protein belongs to the PAL/histidase family. Contains an active site 4-methylidene-imidazol-5-one (MIO), which is formed autocatalytically by cyclization and dehydration of residues Ala-Ser-Gly.

The protein resides in the cytoplasm. The enzyme catalyses L-histidine = trans-urocanate + NH4(+). Its pathway is amino-acid degradation; L-histidine degradation into L-glutamate; N-formimidoyl-L-glutamate from L-histidine: step 1/3. The sequence is that of Histidine ammonia-lyase from Salmonella paratyphi C (strain RKS4594).